A 172-amino-acid polypeptide reads, in one-letter code: Adenine phosphoribosyltransferase (172 aa).

This sequence belongs to the purine/pyrimidine phosphoribosyltransferase family. As to quaternary structure, homodimer.

It localises to the cytoplasm. The enzyme catalyses AMP + diphosphate = 5-phospho-alpha-D-ribose 1-diphosphate + adenine. Its pathway is purine metabolism; AMP biosynthesis via salvage pathway; AMP from adenine: step 1/1. In terms of biological role, catalyzes a salvage reaction resulting in the formation of AMP, that is energically less costly than de novo synthesis. This Exiguobacterium sibiricum (strain DSM 17290 / CCUG 55495 / CIP 109462 / JCM 13490 / 255-15) protein is Adenine phosphoribosyltransferase.